The chain runs to 126 residues: Protein MGF 100-1R (126 aa).

It belongs to the asfivirus MGF 100 family.

Its function is as follows. Plays a role in virus cell tropism, and may be required for efficient virus replication in macrophages. The polypeptide is Protein MGF 100-1R (Ornithodoros (relapsing fever ticks)).